The sequence spans 331 residues: GTPase Obg (331 aa).

In terms of domain architecture, Obg spans 1–159 (MHFIDEVKIY…MWIHLRLKLL (159 aa)). One can recognise an OBG-type G domain in the interval 160 to 327 (SDVGLIGLPN…IVKLALEIIK (168 aa)). GTP contacts are provided by residues 166 to 173 (GLPNAGKS), 191 to 195 (FTTLV), 212 to 215 (DIPG), 279 to 282 (NKCD), and 308 to 310 (STY). Mg(2+) contacts are provided by S173 and T193.

The protein belongs to the TRAFAC class OBG-HflX-like GTPase superfamily. OBG GTPase family. Monomer. The cofactor is Mg(2+).

The protein resides in the cytoplasm. An essential GTPase which binds GTP, GDP and possibly (p)ppGpp with moderate affinity, with high nucleotide exchange rates and a fairly low GTP hydrolysis rate. Plays a role in control of the cell cycle, stress response, ribosome biogenesis and in those bacteria that undergo differentiation, in morphogenesis control. In Rickettsia prowazekii (strain Madrid E), this protein is GTPase Obg.